A 142-amino-acid polypeptide reads, in one-letter code: Large ribosomal subunit protein uL13 (142 aa).

Belongs to the universal ribosomal protein uL13 family. Part of the 50S ribosomal subunit.

Functionally, this protein is one of the early assembly proteins of the 50S ribosomal subunit, although it is not seen to bind rRNA by itself. It is important during the early stages of 50S assembly. The polypeptide is Large ribosomal subunit protein uL13 (Haemophilus influenzae (strain 86-028NP)).